A 505-amino-acid polypeptide reads, in one-letter code: Cyclic AMP-dependent transcription factor ATF-2 (505 aa).

The Nuclear export signal 1 (N-NES) signature appears at 1-7 (MKFKLHV). The segment at 25 to 49 (FLCTAPGCGQRFTNEDHLAVHKHKH) adopts a C2H2-type zinc-finger fold. T52 is subject to Phosphothreonine; by PKC/PRKCH. At S62 the chain carries Phosphoserine; by VRK1. Position 69 is a phosphothreonine; by MAPK11 and MAPK14 (T69). T71 carries the post-translational modification Phosphothreonine; by MAPK1, MAPK3, MAPK11, MAPK12, MAPK14 and PLK3. T73 is subject to Phosphothreonine; by VRK1. Phosphoserine occurs at positions 90 and 112. Residue T116 is modified to Phosphothreonine. Residue S121 is modified to Phosphoserine; by PKC/PRKCA and PKC/PRKCB. 2 disordered regions span residues 125–155 (EPSVVETTHQDSPLPHPESTTSDEKEVPLAQ) and 259–373 (PGIP…RQKR). Position 136 is a phosphoserine (S136). Over residues 282–293 (LTQQHPPVTNGD) the composition is skewed to polar residues. The interval 296-299 (KGHG) is essential for its histone acetyltransferase activity. Positions 318–334 (PATSTTETPASPAHTTP) are enriched in low complexity. Phosphoserine is present on S328. S340 is subject to Phosphoserine; by PKC/PRKCA and PKC/PRKCB. Positions 346–363 (AANEDPDEKRRKFLERNR) are enriched in basic and acidic residues. Positions 352–415 (DEKRRKFLER…AQLKQLLLAH (64 aa)) constitute a bZIP domain. The tract at residues 354–374 (KRRKFLERNRAAASRCRQKRK) is basic motif. K357 is modified (N6-acetyllysine). S367 is subject to Phosphoserine; by PKC/PRKCA and PKC/PRKCB. K374 carries the post-translational modification N6-acetyllysine. The interval 380-408 (LEKKAEDLSSLNGQLQSEVTLLRNEVAQL) is leucine-zipper. A Nuclear export signal 2 (C-NES) motif is present at residues 405–414 (VAQLKQLLLA). The disordered stretch occupies residues 425-472 (KKSGYHTADKDDSSEDISVPSSPHTEAIQHSSVSTSNGVSSTSKAEAV). A phosphoserine mark is found at S442 and S446. A compositionally biased stretch (polar residues) spans 443–454 (VPSSPHTEAIQH). Positions 455–467 (SSVSTSNGVSSTS) are enriched in low complexity. Residues S490 and S498 each carry the phosphoserine; by ATM modification.

The protein belongs to the bZIP family. ATF subfamily. As to quaternary structure, binds DNA as a dimer and can form a homodimer in the absence of DNA. Can form a heterodimer with JUN. Heterodimerization is essential for its transcriptional activity. Interacts with SMAD3 and SMAD4. Binds through its N-terminal region to UTF1 which acts as a coactivator of ATF2 transcriptional activity. Interacts with the HK1/VDAC1 complex. Interacts with NBN, MRE11, XPO1, KAT5 and CUL3. Post-translationally, phosphorylation of Thr-69 by MAPK14 and MAPK11, and at Thr-71 by MAPK1/ERK2, MAPK3/ERK1, MAPK11, MAPK12 and MAPK14 in response to external stimulus like insulin causes increased transcriptional activity. Phosphorylated by PLK3 following hyperosmotic stress. Also phosphorylated and activated by JNK and CaMK4. ATM-mediated phosphorylation at Ser-490 and Ser-498 stimulates its function in DNA damage response. Phosphorylation at Ser-62, Thr-73 and Ser-121 activates its transcriptional activity. Phosphorylation at Thr-69 or Thr-71 enhances acetylation of histones H2B and H4. In terms of tissue distribution, ubiquitously expressed, with more abundant expression in the brain.

The protein resides in the nucleus. The protein localises to the cytoplasm. It localises to the mitochondrion outer membrane. Functionally, transcriptional activator which regulates the transcription of various genes, including those involved in anti-apoptosis, cell growth, and DNA damage response. Dependent on its binding partner, binds to CRE (cAMP response element) consensus sequences (5'-TGACGTCA-3') or to AP-1 (activator protein 1) consensus sequences (5'-TGACTCA-3'). In the nucleus, contributes to global transcription and the DNA damage response, in addition to specific transcriptional activities that are related to cell development, proliferation and death. In the cytoplasm, interacts with and perturbs HK1- and VDAC1-containing complexes at the mitochondrial outer membrane, thereby impairing mitochondrial membrane potential, inducing mitochondrial leakage and promoting cell death. The phosphorylated form (mediated by ATM) plays a role in the DNA damage response and is involved in the ionizing radiation (IR)-induced S phase checkpoint control and in the recruitment of the MRN complex into the IR-induced foci (IRIF). Exhibits histone acetyltransferase (HAT) activity which specifically acetylates histones H2B and H4 in vitro. In concert with CUL3 and RBX1, promotes the degradation of KAT5 thereby attenuating its ability to acetylate and activate ATM. Can elicit oncogenic or tumor suppressor activities depending on the tissue or cell type. The polypeptide is Cyclic AMP-dependent transcription factor ATF-2 (ATF2) (Homo sapiens (Human)).